The following is a 313-amino-acid chain: Olfactory receptor 1J1 (313 aa).

Over 1-25 (MRLKNHSSVSEFLLLGFPIRPEQGG) the chain is Extracellular. Asn-5 carries N-linked (GlcNAc...) asparagine glycosylation. The helical transmembrane segment at 26-46 (IFFSLFLAMYLITVLGNLLII) threads the bilayer. Over 47-57 (LLIRLDSHLHT) the chain is Cytoplasmic. The chain crosses the membrane as a helical span at residues 58-78 (PMYFFLSHLAFTDISFSSVTV). Over 79 to 97 (PKMLTKVQNQPIPITYEEC) the chain is Extracellular. Residues Cys-97 and Cys-189 are joined by a disulfide bond. The helical transmembrane segment at 98-118 (VSQTYFFIFFADLDSFLITSM) threads the bilayer. Residues 119–142 (AYDRYMAICHPLHYITIMSQSRCA) are Cytoplasmic-facing. The chain crosses the membrane as a helical span at residues 143–163 (MLVAVSWVIASACALLHSLLL). At 164–196 (DQLSFCADHTVPHFFCDLGALLKLSCSDTSLNQ) the chain is on the extracellular side. Residues 197 to 217 (LVIFTAGLAAIMLPFLCILIS) form a helical membrane-spanning segment. Topologically, residues 218–240 (YGRIGFTILQVPTTKGICKALST) are cytoplasmic. A helical membrane pass occupies residues 241 to 261 (CGSHLSVVALYYGSIIGLYFL). Residues 262-271 (PPSNSKINNN) lie on the Extracellular side of the membrane. Residues 272 to 292 (IVASVMYTVVTPMLNPFIYSL) traverse the membrane as a helical segment. The Cytoplasmic portion of the chain corresponds to 293-313 (RNKDMKGALKKLLSKKTEFSK).

Belongs to the G-protein coupled receptor 1 family.

The protein localises to the cell membrane. Odorant receptor. The chain is Olfactory receptor 1J1 from Mus musculus (Mouse).